The sequence spans 70 residues: Ranatuerin-2SN1 (70 aa).

The signal sequence occupies residues 1 to 22; that stretch reads MFTLKKSLLLIFFLGTISLSLC. The propeptide at 23 to 40 is removed in mature form; the sequence is EKERDADDDEVEVIKQEE. Cys-65 and Cys-70 form a disulfide bridge.

It belongs to the frog skin active peptide (FSAP) family. Ranatuerin subfamily. Expressed by the skin glands.

It is found in the secreted. Its function is as follows. Antimicrobial peptide. Weakly active against P.faecalis X29. Not active against fungi. Shows very weak hemolytic activity against human erythrocytes. This chain is Ranatuerin-2SN1, found in Sylvirana spinulosa (Fine-spined frog).